The primary structure comprises 652 residues: Tetracycline resistance protein TetP (652 aa).

The tr-type G domain maps to 2-252; that stretch reads KKIINIGIVA…CSYFPFASND (251 aa). GTP is bound by residues 11–18, 75–79, and 129–132; these read AHVDAGKT, DTPGH, and NKLD.

It belongs to the TRAFAC class translation factor GTPase superfamily. Classic translation factor GTPase family. TetM/TetO subfamily.

In terms of biological role, abolishes the inhibitory effect of tetracyclin on protein synthesis by a non-covalent modification of the ribosomes. This Clostridium perfringens protein is Tetracycline resistance protein TetP (tetP).